The following is a 411-amino-acid chain: Argininosuccinate synthase (411 aa).

Residues 15–23 (AYSGGLDTS) and Ala-42 each bind ATP. L-citrulline is bound by residues Tyr-93 and Ser-98. Residue Gly-123 coordinates ATP. L-aspartate is bound by residues Thr-125, Asn-129, and Asp-130. Asn-129 is a binding site for L-citrulline. L-citrulline is bound by residues Arg-133, Ser-185, Ser-194, Glu-270, and Tyr-282.

It belongs to the argininosuccinate synthase family. Type 1 subfamily. In terms of assembly, homotetramer.

The protein localises to the cytoplasm. The catalysed reaction is L-citrulline + L-aspartate + ATP = 2-(N(omega)-L-arginino)succinate + AMP + diphosphate + H(+). The protein operates within amino-acid biosynthesis; L-arginine biosynthesis; L-arginine from L-ornithine and carbamoyl phosphate: step 2/3. The protein is Argininosuccinate synthase of Psychrobacter sp. (strain PRwf-1).